Reading from the N-terminus, the 157-residue chain is uncharacterized protein (157 aa).

One can recognise an N-acetyltransferase domain in the interval 3-157 (FTLEDMTEEE…TNIRMRKQLC (155 aa)).

Belongs to the acetyltransferase family.

This is an uncharacterized protein from Bacillus subtilis (strain 168).